The following is a 317-amino-acid chain: 4-hydroxy-3-methylbut-2-enyl diphosphate reductase (317 aa).

Cysteine 12 is a binding site for [4Fe-4S] cluster. (2E)-4-hydroxy-3-methylbut-2-enyl diphosphate contacts are provided by histidine 41 and histidine 74. Dimethylallyl diphosphate is bound by residues histidine 41 and histidine 74. 2 residues coordinate isopentenyl diphosphate: histidine 41 and histidine 74. Cysteine 97 is a binding site for [4Fe-4S] cluster. Histidine 125 contributes to the (2E)-4-hydroxy-3-methylbut-2-enyl diphosphate binding site. Dimethylallyl diphosphate is bound at residue histidine 125. Histidine 125 lines the isopentenyl diphosphate pocket. Glutamate 127 acts as the Proton donor in catalysis. Threonine 168 provides a ligand contact to (2E)-4-hydroxy-3-methylbut-2-enyl diphosphate. Cysteine 198 is a [4Fe-4S] cluster binding site. (2E)-4-hydroxy-3-methylbut-2-enyl diphosphate contacts are provided by serine 226, serine 227, asparagine 228, and serine 270. Dimethylallyl diphosphate contacts are provided by serine 226, serine 227, asparagine 228, and serine 270. Serine 226, serine 227, asparagine 228, and serine 270 together coordinate isopentenyl diphosphate.

This sequence belongs to the IspH family. Homodimer. Requires [4Fe-4S] cluster as cofactor.

It carries out the reaction isopentenyl diphosphate + 2 oxidized [2Fe-2S]-[ferredoxin] + H2O = (2E)-4-hydroxy-3-methylbut-2-enyl diphosphate + 2 reduced [2Fe-2S]-[ferredoxin] + 2 H(+). The enzyme catalyses dimethylallyl diphosphate + 2 oxidized [2Fe-2S]-[ferredoxin] + H2O = (2E)-4-hydroxy-3-methylbut-2-enyl diphosphate + 2 reduced [2Fe-2S]-[ferredoxin] + 2 H(+). It functions in the pathway isoprenoid biosynthesis; dimethylallyl diphosphate biosynthesis; dimethylallyl diphosphate from (2E)-4-hydroxy-3-methylbutenyl diphosphate: step 1/1. The protein operates within isoprenoid biosynthesis; isopentenyl diphosphate biosynthesis via DXP pathway; isopentenyl diphosphate from 1-deoxy-D-xylulose 5-phosphate: step 6/6. Catalyzes the conversion of 1-hydroxy-2-methyl-2-(E)-butenyl 4-diphosphate (HMBPP) into a mixture of isopentenyl diphosphate (IPP) and dimethylallyl diphosphate (DMAPP). Acts in the terminal step of the DOXP/MEP pathway for isoprenoid precursor biosynthesis. The sequence is that of 4-hydroxy-3-methylbut-2-enyl diphosphate reductase from Yersinia pestis bv. Antiqua (strain Antiqua).